Consider the following 309-residue polypeptide: Flavonol sulfotransferase-like (309 aa).

Residue 59 to 64 (KTGTTW) coordinates 3'-phosphoadenylyl sulfate. Catalysis depends on histidine 119, which acts as the Proton acceptor. 3'-phosphoadenylyl sulfate is bound by residues arginine 141, serine 149, tyrosine 207, and 274-276 (RKG).

Belongs to the sulfotransferase 1 family.

The protein resides in the cytoplasm. The sequence is that of Flavonol sulfotransferase-like from Flaveria bidentis (Coastal plain yellowtops).